The sequence spans 389 residues: Chalcone synthase 1A (389 aa).

The active site involves C164.

The protein belongs to the thiolase-like superfamily. Chalcone/stilbene synthases family.

The catalysed reaction is (E)-4-coumaroyl-CoA + 3 malonyl-CoA + 3 H(+) = 2',4,4',6'-tetrahydroxychalcone + 3 CO2 + 4 CoA. It functions in the pathway secondary metabolite biosynthesis; flavonoid biosynthesis. The primary product of this enzyme is 4,2',4',6'-tetrahydroxychalcone (also termed naringenin-chalcone or chalcone) which can under specific conditions spontaneously isomerize into naringenin. This chain is Chalcone synthase 1A (CHS1A), found in Solanum tuberosum (Potato).